A 249-amino-acid polypeptide reads, in one-letter code: tRNA pseudouridine synthase A (249 aa).

The active-site Nucleophile is the Asp-53. A substrate-binding site is contributed by Tyr-111.

This sequence belongs to the tRNA pseudouridine synthase TruA family. As to quaternary structure, homodimer.

It catalyses the reaction uridine(38/39/40) in tRNA = pseudouridine(38/39/40) in tRNA. Its function is as follows. Formation of pseudouridine at positions 38, 39 and 40 in the anticodon stem and loop of transfer RNAs. This Streptococcus pyogenes serotype M3 (strain ATCC BAA-595 / MGAS315) protein is tRNA pseudouridine synthase A.